We begin with the raw amino-acid sequence, 549 residues long: Probable protein kinase UbiB (549 aa).

In terms of domain architecture, Protein kinase spans 123 to 501 (DFNETPLASA…QQQAHKSNYL (379 aa)). Residues 129–137 (LASASISQV) and Lys-152 each bind ATP. Asp-287 functions as the Proton acceptor in the catalytic mechanism. Helical transmembrane passes span 498–518 (SNYL…LFNQ) and 520–540 (ATLW…IIGW).

It belongs to the ABC1 family. UbiB subfamily.

The protein localises to the cell inner membrane. It participates in cofactor biosynthesis; ubiquinone biosynthesis [regulation]. In terms of biological role, is probably a protein kinase regulator of UbiI activity which is involved in aerobic coenzyme Q (ubiquinone) biosynthesis. The protein is Probable protein kinase UbiB of Shewanella sp. (strain MR-4).